Consider the following 1088-residue polypeptide: Sterol regulatory element-binding protein 2 (1088 aa).

The segment at 1–38 is transcriptional activation (acidic); it reads METLTELGDELTLGDIDEMLQFVSNQVGEFPDLFEEQL. Residues 1 to 440 are Cytoplasmic-facing; it reads METLTELGDE…TGLGMMDRSR (440 aa). The span at 59-70 shows a compositional bias: polar residues; the sequence is AAQQPYTTSAPQ. The tract at residues 59–87 is disordered; that stretch reads AAQQPYTTSAPQPQLLPVKAPPQATPQRT. In terms of domain architecture, bHLH spans 290–340; the sequence is ERRTTHNIIEKRYRSSINDKIMELKDLVMGTDAKMHKSGVLKKAIDYIKYL. A leucine-zipper region spans residues 340–361; sequence LQQVNQKLRQENMALKLANQKN. Positions 392–431 are disordered; that stretch reads SPPASDSGSPAVFSPYSVDSEPGSPLLDDEKVKDEPDSPT. A helical transmembrane segment spans residues 441 to 461; sequence MLLCTMTFLCLSFNPLTSLLH. Residues 462-494 are Lumenal-facing; the sequence is PESGQYSERAVQHGTGRTMLGVEMSGFYGSWFD. Residues 495 to 515 form a helical membrane-spanning segment; it reads WLIPTIILWLVNGVIVLSVFM. Over 516 to 1088 the chain is Cytoplasmic; it reads KLLIHGEPVT…LSGGTAMAAS (573 aa).

Belongs to the SREBP family. As to quaternary structure, forms a tight complex with scap, the SCAP-SREBP complex, in the endoplasmic reticulum membrane. Homodimer; efficient DNA binding of the soluble transcription factor fragment requires dimerization with another bHLH protein. In terms of processing, processed in the Golgi apparatus, releasing the protein from the membrane. At low cholesterol the SCAP-SREBP complex is recruited into COPII vesicles for export from the endoplasmic reticulum. In the Golgi, complex SREBPs are cleaved sequentially by site-1 (MBTPS1, S1P) and site-2 (MBTPS2, S2P) proteases. The first cleavage by site-1 protease occurs within the luminal loop, the second cleavage by site-2 protease occurs within the first transmembrane domain, releasing the transcription factor from the Golgi membrane.

The protein localises to the endoplasmic reticulum membrane. Its subcellular location is the golgi apparatus membrane. It is found in the cytoplasmic vesicle. The protein resides in the COPII-coated vesicle membrane. It localises to the nucleus. In terms of biological role, precursor of the transcription factor form (Processed sterol regulatory element-binding protein 2), which is embedded in the endoplasmic reticulum membrane. Low sterol concentrations promote processing of this form, releasing the transcription factor form that translocates into the nucleus and activates transcription of genes involved in cholesterol biosynthesis. Its function is as follows. Key transcription factor that regulates expression of genes involved in cholesterol biosynthesis. Binds to the sterol regulatory element 1 (SRE-1) (5'-ATCACCCCAC-3'). Has dual sequence specificity binding to both an E-box motif (5'-ATCACGTGA-3') and to SRE-1 (5'-ATCACCCCAC-3'). Regulates transcription of genes related to cholesterol synthesis pathway. The polypeptide is Sterol regulatory element-binding protein 2 (Xenopus laevis (African clawed frog)).